The sequence spans 148 residues: Aspartate 1-decarboxylase (148 aa).

Ser-25 functions as the Schiff-base intermediate with substrate; via pyruvic acid in the catalytic mechanism. A Pyruvic acid (Ser) modification is found at Ser-25. Substrate is bound at residue Thr-57. Tyr-58 (proton donor) is an active-site residue. 73-75 provides a ligand contact to substrate; that stretch reads GAA.

This sequence belongs to the PanD family. In terms of assembly, heterooctamer of four alpha and four beta subunits. The cofactor is pyruvate. Post-translationally, is synthesized initially as an inactive proenzyme, which is activated by self-cleavage at a specific serine bond to produce a beta-subunit with a hydroxyl group at its C-terminus and an alpha-subunit with a pyruvoyl group at its N-terminus.

Its subcellular location is the cytoplasm. The enzyme catalyses L-aspartate + H(+) = beta-alanine + CO2. It participates in cofactor biosynthesis; (R)-pantothenate biosynthesis; beta-alanine from L-aspartate: step 1/1. Its function is as follows. Catalyzes the pyruvoyl-dependent decarboxylation of aspartate to produce beta-alanine. In Rhodococcus jostii (strain RHA1), this protein is Aspartate 1-decarboxylase.